We begin with the raw amino-acid sequence, 2035 residues long: Ral GTPase-activating protein subunit alpha-1 (2035 aa).

The interval 343–384 (LVSREESKNDTVDKADKTAEPEQSHSNTSTLTEREPSSSSLC) is disordered. The span at 345–365 (SREESKNDTVDKADKTAEPEQ) shows a compositional bias: basic and acidic residues. A compositionally biased stretch (polar residues) spans 366–384 (SHSNTSTLTEREPSSSSLC). A phosphoserine mark is found at S710 and S720. Positions 714–754 (SFSRGWSRDQPGQAPMRQRSATTTGSPGTEKARSIVRQKTV) are disordered. T753 is subject to Phosphothreonine. A Phosphoserine modification is found at S772. A Phosphothreonine modification is found at T777. Phosphoserine is present on S796. The span at 807–817 (ERAKVNKEDTS) shows a compositional bias: basic and acidic residues. Disordered regions lie at residues 807–834 (ERAK…SANV) and 848–911 (SGNA…SHSD). Polar residues-rich tracts occupy residues 824–833 (NSETGGSSAN) and 849–862 (GNAS…SSPG). Residues S859, S860, and S863 each carry the phosphoserine modification. The span at 894–911 (SPASAGSSDLMSSDSHSD) shows a compositional bias: low complexity. 4 positions are modified to phosphoserine: S985, S989, S993, and S999. The interval 986–1008 (ESASPVHSALGSRSQTPSPSTLN) is disordered. T1001 bears the Phosphothreonine mark. Residues S1003 and S1477 each carry the phosphoserine modification. Residues 1326–2034 (FTNKTVAHVA…PYHHFPADAD (709 aa)) form a minimal domain that binds to TCF3/E12 region. Residues 1713–1746 (SEKQENDVINAILKQYTEEKEFVEKHFNDLNMKA) are a coiled coil. Residues 1795–2003 (LRNLDSRQCR…EERARYLQTI (209 aa)) form the Rap-GAP domain.

Component of the heterodimeric RalGAP1 complex with RALGAPB. Heterodimerization is required for activity. Interacts with the HLH region of TCF3/isoform E12. As to expression, highly expressed in brain, thymus and testis with lower levels in lung and spleen and barely detectable in heart or liver (at protein level).

Its subcellular location is the cytoplasm. The protein localises to the nucleus. In terms of biological role, catalytic subunit of the heterodimeric RalGAP1 complex which acts as a GTPase activator for the Ras-like small GTPases RALA and RALB. The sequence is that of Ral GTPase-activating protein subunit alpha-1 (Ralgapa1) from Rattus norvegicus (Rat).